The following is a 130-amino-acid chain: L-ectoine synthase (130 aa).

Belongs to the ectoine synthase family.

It catalyses the reaction (2S)-4-acetamido-2-aminobutanoate = L-ectoine + H2O. Its pathway is amine and polyamine biosynthesis; ectoine biosynthesis; L-ectoine from L-aspartate 4-semialdehyde: step 3/3. In terms of biological role, catalyzes the circularization of gamma-N-acetyl-alpha,gamma-diaminobutyric acid (ADABA) to ectoine (1,4,5,6-tetrahydro-2-methyl-4-pyrimidine carboxylic acid), which is an excellent osmoprotectant. The chain is L-ectoine synthase from Mycobacteroides abscessus (strain ATCC 19977 / DSM 44196 / CCUG 20993 / CIP 104536 / JCM 13569 / NCTC 13031 / TMC 1543 / L948) (Mycobacterium abscessus).